A 267-amino-acid polypeptide reads, in one-letter code: NAD kinase 2 (267 aa).

Asp52 serves as the catalytic Proton acceptor. NAD(+)-binding positions include 52-53 (DA), 124-125 (NE), Arg151, Asp153, 164-169 (TAYNKS), and Ala188.

Belongs to the NAD kinase family. It depends on a divalent metal cation as a cofactor.

The protein localises to the cytoplasm. It carries out the reaction NAD(+) + ATP = ADP + NADP(+) + H(+). Functionally, involved in the regulation of the intracellular balance of NAD and NADP, and is a key enzyme in the biosynthesis of NADP. Catalyzes specifically the phosphorylation on 2'-hydroxyl of the adenosine moiety of NAD to yield NADP. In Bacillus cereus (strain ATCC 14579 / DSM 31 / CCUG 7414 / JCM 2152 / NBRC 15305 / NCIMB 9373 / NCTC 2599 / NRRL B-3711), this protein is NAD kinase 2.